We begin with the raw amino-acid sequence, 315 residues long: Calcium homeostasis modulator protein 4 (315 aa).

Topologically, residues 1-14 (MSPDLNCISSSLLR) are cytoplasmic. A helical membrane pass occupies residues 15–37 (SEPCINSLIAILTVCGQQLFSSY). The Extracellular segment spans residues 38 to 48 (TFSCPCQVGKN). Intrachain disulfides connect cysteine 41–cysteine 132 and cysteine 43–cysteine 163. Residues 49 to 71 (FYYGSAFLVVPALILLIAGYALR) form a helical membrane-spanning segment. Topologically, residues 72–104 (GQMWTVASEYCCCSCTPPYRRSSPLERRLACLM) are cytoplasmic. Residues 105-130 (FFDITGRALVAPLTWLTVTLLTGTYY) form a helical membrane-spanning segment. The Extracellular segment spans residues 131 to 184 (ECAASEFASVDQYPMFANVTPSKREEMLAGFPCYTSAPSDVIPIRDEVALLHRY). The helical transmembrane segment at 185–208 (QSQMLGWILVVLATIALLLSKCLA) threads the bilayer. The Cytoplasmic segment spans residues 209–315 (RCCSPLTSLQ…DRQEGIEMKP (107 aa)).

The protein belongs to the CALHM family. As to quaternary structure, oligomerizes to form decameric and undecameric channels. Two hemichannels can assemble in a tail-to-tail manner to form a gap junction.

The protein resides in the cell membrane. Its function is as follows. May assemble to form gap junction channel-like structures involved in intercellular communication. Channel gating and ion conductance are likely regulated by membrane lipids rather than by membrane depolarization or extracellular calcium levels. The sequence is that of Calcium homeostasis modulator protein 4 from Mus musculus (Mouse).